A 56-amino-acid polypeptide reads, in one-letter code: Large ribosomal subunit protein bL32 (56 aa).

The segment at 1-35 (MAVQQNKPTRSKRGMRRSHDALTATHVSVDKTSGE) is disordered.

It belongs to the bacterial ribosomal protein bL32 family.

This chain is Large ribosomal subunit protein bL32, found in Proteus mirabilis (strain HI4320).